A 208-amino-acid chain; its full sequence is Small ribosomal subunit protein uS4 (208 aa).

One can recognise an S4 RNA-binding domain in the interval 95-159 (RRIDNIVYRA…FKKLVRSNIE (65 aa)).

This sequence belongs to the universal ribosomal protein uS4 family. In terms of assembly, part of the 30S ribosomal subunit. Contacts protein S5. The interaction surface between S4 and S5 is involved in control of translational fidelity.

Its function is as follows. One of the primary rRNA binding proteins, it binds directly to 16S rRNA where it nucleates assembly of the body of the 30S subunit. Functionally, with S5 and S12 plays an important role in translational accuracy. The polypeptide is Small ribosomal subunit protein uS4 (Borrelia recurrentis (strain A1)).